A 243-amino-acid polypeptide reads, in one-letter code: tRNA1(Val) (adenine(37)-N6)-methyltransferase (243 aa).

The protein belongs to the methyltransferase superfamily. tRNA (adenine-N(6)-)-methyltransferase family.

It is found in the cytoplasm. The catalysed reaction is adenosine(37) in tRNA1(Val) + S-adenosyl-L-methionine = N(6)-methyladenosine(37) in tRNA1(Val) + S-adenosyl-L-homocysteine + H(+). Its function is as follows. Specifically methylates the adenine in position 37 of tRNA(1)(Val) (anticodon cmo5UAC). The sequence is that of tRNA1(Val) (adenine(37)-N6)-methyltransferase from Shewanella loihica (strain ATCC BAA-1088 / PV-4).